Here is a 169-residue protein sequence, read N- to C-terminus: Chorismate pyruvate-lyase (169 aa).

Positions 37, 79, 117, and 158 each coordinate substrate.

The protein belongs to the UbiC family. As to quaternary structure, monomer.

It localises to the cytoplasm. The enzyme catalyses chorismate = 4-hydroxybenzoate + pyruvate. The protein operates within cofactor biosynthesis; ubiquinone biosynthesis. Functionally, removes the pyruvyl group from chorismate, with concomitant aromatization of the ring, to provide 4-hydroxybenzoate (4HB) for the ubiquinone pathway. The protein is Chorismate pyruvate-lyase of Proteus mirabilis (strain HI4320).